A 213-amino-acid chain; its full sequence is Thymidylate kinase (213 aa).

Position 10–17 (10–17 (GLEGAGKT)) interacts with ATP.

Belongs to the thymidylate kinase family.

It carries out the reaction dTMP + ATP = dTDP + ADP. In terms of biological role, phosphorylation of dTMP to form dTDP in both de novo and salvage pathways of dTTP synthesis. The sequence is that of Thymidylate kinase from Escherichia coli O1:K1 / APEC.